Consider the following 101-residue polypeptide: Large ribosomal subunit protein eL21 (101 aa).

Positions 1–18 (MVKHSRGYRTRSRSLLRK) are enriched in basic residues. The segment at 1–23 (MVKHSRGYRTRSRSLLRKSPRER) is disordered.

This sequence belongs to the eukaryotic ribosomal protein eL21 family.

The polypeptide is Large ribosomal subunit protein eL21 (Saccharolobus islandicus (strain Y.N.15.51 / Yellowstone #2) (Sulfolobus islandicus)).